We begin with the raw amino-acid sequence, 313 residues long: Cytosolic Fe-S cluster assembly factor NUBP1 homolog (313 aa).

Residues 1–25 are disordered; it reads MSDVPEDANAGCPGTGSAGAGKASG. The [4Fe-4S] cluster site is built by Cys-12, Cys-26, Cys-29, and Cys-35. 66–73 is a binding site for ATP; it reads GKGGVGKS. [4Fe-4S] cluster-binding residues include Cys-240 and Cys-243.

Belongs to the Mrp/NBP35 ATP-binding proteins family. NUBP1/NBP35 subfamily. In terms of assembly, heterotetramer of 2 NUBP1 and 2 NUBP2 chains. The cofactor is [4Fe-4S] cluster.

It is found in the cytoplasm. It localises to the cell projection. Its function is as follows. Component of the cytosolic iron-sulfur (Fe/S) protein assembly (CIA) machinery. Required for maturation of extramitochondrial Fe-S proteins. The NUBP1-NUBP2 heterotetramer forms a Fe-S scaffold complex, mediating the de novo assembly of an Fe-S cluster and its transfer to target apoproteins. Regulates cilium formation and structure. This Caenorhabditis briggsae protein is Cytosolic Fe-S cluster assembly factor NUBP1 homolog.